The following is a 233-amino-acid chain: Leucyl/phenylalanyl-tRNA--protein transferase (233 aa).

Belongs to the L/F-transferase family.

The protein localises to the cytoplasm. It carries out the reaction N-terminal L-lysyl-[protein] + L-leucyl-tRNA(Leu) = N-terminal L-leucyl-L-lysyl-[protein] + tRNA(Leu) + H(+). The catalysed reaction is N-terminal L-arginyl-[protein] + L-leucyl-tRNA(Leu) = N-terminal L-leucyl-L-arginyl-[protein] + tRNA(Leu) + H(+). The enzyme catalyses L-phenylalanyl-tRNA(Phe) + an N-terminal L-alpha-aminoacyl-[protein] = an N-terminal L-phenylalanyl-L-alpha-aminoacyl-[protein] + tRNA(Phe). Functions in the N-end rule pathway of protein degradation where it conjugates Leu, Phe and, less efficiently, Met from aminoacyl-tRNAs to the N-termini of proteins containing an N-terminal arginine or lysine. This Klebsiella pneumoniae subsp. pneumoniae (strain ATCC 700721 / MGH 78578) protein is Leucyl/phenylalanyl-tRNA--protein transferase.